We begin with the raw amino-acid sequence, 596 residues long: Sensor protein ChvG (596 aa).

Positions 1–22 (MLKKTPETVSDSDDAEERGSER) are disordered. Topologically, residues 1 to 47 (MLKKTPETVSDSDDAEERGSERRHRIHPLTIIRRIFGNAVFSSLTRR) are cytoplasmic. Residues 48-68 (ILFFNVAATVVLVGGILYLNQ) traverse the membrane as a helical segment. The Periplasmic portion of the chain corresponds to 69–283 (FREGLIDARV…VHAERLAIMR (215 aa)). The helical transmembrane segment at 284 to 304 (VFGIATLVNIVLSLLLSSTIA) threads the bilayer. Residues 301-356 (STIATPLRRLSAAAIRVRRGARTREEIPDFSARQDEIGNLSIALREMTTALYDRID) form the HAMP domain. Topologically, residues 305–596 (TPLRRLSAAA…SLPAAETHER (292 aa)) are cytoplasmic. The Histidine kinase domain occupies 364-592 (DVSHELKNPL…RFTLSLPAAE (229 aa)). Phosphohistidine is present on histidine 367.

The protein resides in the cell inner membrane. It catalyses the reaction ATP + protein L-histidine = ADP + protein N-phospho-L-histidine.. In terms of biological role, member of a two-component regulatory system ChvG/ChvI. Activates ChvI by phosphorylation (Potential). The sequence is that of Sensor protein ChvG (chvG) from Agrobacterium fabrum (strain C58 / ATCC 33970) (Agrobacterium tumefaciens (strain C58)).